The sequence spans 91 residues: Small nuclear ribonucleoprotein F (91 aa).

The Sm domain maps to 8–81 (APKPFLYDLK…VLFVRGIDDE (74 aa)).

It belongs to the snRNP Sm proteins family. SmF/LSm6 subfamily. In terms of assembly, core component of the spliceosomal U1, U2, U4 and U5 small nuclear ribonucleoproteins (snRNPs), the building blocks of the spliceosome. Most spliceosomal snRNPs contain a common set of Sm proteins, SNRPB, SNRPD1, SNRPD2, SNRPD3, SNRPE, SNRPF and SNRPG that assemble in a heptameric protein ring on the Sm site of the small nuclear RNA to form the core snRNP. Component of the U1 snRNP. Component of the U4/U6-U5 tri-snRNP complex. Component of the U7 snRNP complex. Component of the U11/U12 snRNPs that are part of the U12-type spliceosome. Part of the SMN-Sm complex that catalyzes core snRNPs assembly.

It localises to the cytoplasm. The protein localises to the cytosol. Its subcellular location is the nucleus. Its function is as follows. Plays a role in pre-mRNA splicing as a core component of the spliceosomal U1, U2, U4 and U5 small nuclear ribonucleoproteins (snRNPs), the building blocks of the spliceosome. Component of both the pre-catalytic spliceosome B complex and activated spliceosome C complexes. Is also a component of the minor U12 spliceosome. The protein is Small nuclear ribonucleoprotein F (snrpf) of Dictyostelium discoideum (Social amoeba).